We begin with the raw amino-acid sequence, 434 residues long: Methylenetetrahydrofolate--tRNA-(uracil-5-)-methyltransferase TrmFO (434 aa).

Residue 10-15 (GAGLAG) participates in FAD binding.

The protein belongs to the MnmG family. TrmFO subfamily. The cofactor is FAD.

The protein resides in the cytoplasm. It carries out the reaction uridine(54) in tRNA + (6R)-5,10-methylene-5,6,7,8-tetrahydrofolate + NADH + H(+) = 5-methyluridine(54) in tRNA + (6S)-5,6,7,8-tetrahydrofolate + NAD(+). The enzyme catalyses uridine(54) in tRNA + (6R)-5,10-methylene-5,6,7,8-tetrahydrofolate + NADPH + H(+) = 5-methyluridine(54) in tRNA + (6S)-5,6,7,8-tetrahydrofolate + NADP(+). Functionally, catalyzes the folate-dependent formation of 5-methyl-uridine at position 54 (M-5-U54) in all tRNAs. The polypeptide is Methylenetetrahydrofolate--tRNA-(uracil-5-)-methyltransferase TrmFO (Bacillus cereus (strain ATCC 14579 / DSM 31 / CCUG 7414 / JCM 2152 / NBRC 15305 / NCIMB 9373 / NCTC 2599 / NRRL B-3711)).